The primary structure comprises 138 residues: Putative transcriptional regulatory protein NedR (138 aa).

The segment at 1–25 (MCWGRSWTFGRSSSKGWRPTSSASS) is disordered. The segment covering 9–25 (FGRSSSKGWRPTSSASS) has biased composition (polar residues).

Functionally, may serve as a transcriptional regulator. In Micromonospora viridifaciens, this protein is Putative transcriptional regulatory protein NedR (nedR).